We begin with the raw amino-acid sequence, 628 residues long: Probable alpha-L-arabinofuranosidase A (628 aa).

A signal peptide spans 1–25 (MVAFSALSGVSALSLLLCLVQHAHG). Asn-36, Asn-51, Asn-74, Asn-152, Asn-171, Asn-260, Asn-359, and Asn-493 each carry an N-linked (GlcNAc...) asparagine glycan.

The protein belongs to the glycosyl hydrolase 51 family.

It is found in the secreted. It catalyses the reaction Hydrolysis of terminal non-reducing alpha-L-arabinofuranoside residues in alpha-L-arabinosides.. The protein operates within glycan metabolism; L-arabinan degradation. Its function is as follows. Alpha-L-arabinofuranosidase involved in the degradation of arabinoxylan, a major component of plant hemicellulose. Acts only on small linear 1,5-alpha-linked L-arabinofuranosyl oligosaccharides. The chain is Probable alpha-L-arabinofuranosidase A (abfA) from Aspergillus awamori (Black koji mold).